The following is a 428-amino-acid chain: MCDVVLGSQWGDEGKGKLVDLLCDDIDVCARCAGGNNAGHTIVVDKTKYDFHMLPSGLVNPNCKNLVGSGVVIHVPSFFQELENLEAKGLDCRDRLFVSSRAHLVFDFHQRTDKLKEAELSTNKKAIGTTGKGIGPTYSTKASRSGIRVHHLVNPDPAAWEDFKTRYMRLVESRQKRYGQFDYDYEEELARYEKYRETLRPFVVDSVVFMHDAIAANKKILVEGANALMLDIDFGTYPYVTSSSTGIGGVLTGLGIPPRTIKNVYGVVKAYTTRVGEGPFPTEQLNEVGETLQDVGAEYGVTTGRKRRCGWLDLVVLKYSNAINGYTSLNITKLDVLDKFKEIEVGVAYKLNGKELPSFPEDLIDLAKVEVVYKKFPGWEQDITGISKYEDLPENAKNYLKFIEEYLGVPIQWVGTGPARESMLEKKI.

GTP is bound by residues 11 to 17 and 39 to 41; these read GDEGKGK and GHT. Asp-12 acts as the Proton acceptor in catalysis. Mg(2+) contacts are provided by Asp-12 and Gly-39. Residues 12-15, 37-40, Thr-130, Arg-144, Asn-226, Thr-241, and Arg-305 each bind IMP; these read DEGK and NAGH. His-40 (proton donor) is an active-site residue. Residue 301–307 participates in substrate binding; the sequence is VTTGRKR. GTP is bound by residues Arg-307, 333–335, and 415–417; these read KLD and GTG.

This sequence belongs to the adenylosuccinate synthetase family. In terms of assembly, homodimer. The cofactor is Mg(2+).

The protein resides in the cytoplasm. The enzyme catalyses IMP + L-aspartate + GTP = N(6)-(1,2-dicarboxyethyl)-AMP + GDP + phosphate + 2 H(+). The protein operates within purine metabolism; AMP biosynthesis via de novo pathway; AMP from IMP: step 1/2. Its function is as follows. Plays an important role in the de novo pathway and in the salvage pathway of purine nucleotide biosynthesis. Catalyzes the first committed step in the biosynthesis of AMP from IMP. The protein is Adenylosuccinate synthetase of Candida tropicalis (strain ATCC MYA-3404 / T1) (Yeast).